The primary structure comprises 389 residues: MNSTEEIDLYNRWKALERQLEMLDLQEGFIKEDCKSLKRELIRAQEEVKRIQSVPLVIGQFLEAIDQNTAIVGSTTGSNYVVRILSTLDRELLKPSASVALQRHSNALVDILPPEADSSISMLRPDERPDVSYADVGGLDVQKQEVREAVELPLTQGDLYRQIGIDPPRGVLLYGPPGTGKTMLVKAVANSTAANFIRVVGSEFVQKYLGEGPRMVRDVFRMARENAPAIIFIDEIDAIATKRFDAQTGADREVQRILIELLTQMDGFDQGANVKVIMATNRADTLDPALLRPGRLDRKIEFPSYRDRRQRRLVFQTITAKMLLSPEVDLDTFIMRPDASSGAQIAAIMQDAGLLAVRKSRGVILQSDIEEAYARAVKPTDMEQFAFYK.

175-182 contributes to the ATP binding site; that stretch reads GPPGTGKT.

Belongs to the AAA ATPase family.

The protein localises to the cytoplasm. Its subcellular location is the nucleus. Functionally, the 26S proteasome is involved in the ATP-dependent degradation of ubiquitinated proteins. The regulatory (or ATPase) complex confers ATP dependency and substrate specificity to the 26S complex. The chain is 26S proteasome regulatory subunit 6B homolog (rpt3) from Schizosaccharomyces pombe (strain 972 / ATCC 24843) (Fission yeast).